We begin with the raw amino-acid sequence, 1262 residues long: Isoleucine--tRNA ligase, cytoplasmic (1262 aa).

Position 1 is an N-acetylmethionine (M1). Residues 48 to 58 (PFATGLPHYGH) carry the 'HIGH' region motif. Residues 600–604 (KMSKR) carry the 'KMSKS' region motif. ATP is bound at residue K603. Phosphoserine is present on residues S1047 and S1049. At T1058 the chain carries Phosphothreonine.

It belongs to the class-I aminoacyl-tRNA synthetase family. Part of a multisubunit complex that groups tRNA ligases for Arg (RARS1), Asp (DARS1), Gln (QARS1), Ile (IARS1), Leu (LARS1), Lys (KARS1), Met (MARS1) the bifunctional ligase for Glu and Pro (EPRS1) and the auxiliary subunits AIMP1/p43, AIMP2/p38 and EEF1E1/p18. In terms of tissue distribution, expressed in liver and muscle (at protein level).

It is found in the cytoplasm. Its subcellular location is the cytosol. The enzyme catalyses tRNA(Ile) + L-isoleucine + ATP = L-isoleucyl-tRNA(Ile) + AMP + diphosphate. In terms of biological role, catalyzes the specific attachment of an amino acid to its cognate tRNA in a 2 step reaction: the amino acid (AA) is first activated by ATP to form AA-AMP and then transferred to the acceptor end of the tRNA. In Homo sapiens (Human), this protein is Isoleucine--tRNA ligase, cytoplasmic.